The sequence spans 122 residues: Large ribosomal subunit protein uL18 (122 aa).

This sequence belongs to the universal ribosomal protein uL18 family. Part of the 50S ribosomal subunit; part of the 5S rRNA/L5/L18/L25 subcomplex. Contacts the 5S and 23S rRNAs.

Functionally, this is one of the proteins that bind and probably mediate the attachment of the 5S RNA into the large ribosomal subunit, where it forms part of the central protuberance. In Mycobacterium ulcerans (strain Agy99), this protein is Large ribosomal subunit protein uL18.